The primary structure comprises 282 residues: Bifunctional protein FolD (282 aa).

Residues 165–167, S190, and I231 each bind NADP(+); that span reads NRS.

This sequence belongs to the tetrahydrofolate dehydrogenase/cyclohydrolase family. As to quaternary structure, homodimer.

The enzyme catalyses (6R)-5,10-methylene-5,6,7,8-tetrahydrofolate + NADP(+) = (6R)-5,10-methenyltetrahydrofolate + NADPH. It catalyses the reaction (6R)-5,10-methenyltetrahydrofolate + H2O = (6R)-10-formyltetrahydrofolate + H(+). It participates in one-carbon metabolism; tetrahydrofolate interconversion. Functionally, catalyzes the oxidation of 5,10-methylenetetrahydrofolate to 5,10-methenyltetrahydrofolate and then the hydrolysis of 5,10-methenyltetrahydrofolate to 10-formyltetrahydrofolate. The protein is Bifunctional protein FolD of Clostridium botulinum (strain Langeland / NCTC 10281 / Type F).